Consider the following 347-residue polypeptide: Protein RecA (347 aa).

ATP is bound at residue 68-75; that stretch reads GPESSGKT.

This sequence belongs to the RecA family.

It is found in the cytoplasm. Functionally, can catalyze the hydrolysis of ATP in the presence of single-stranded DNA, the ATP-dependent uptake of single-stranded DNA by duplex DNA, and the ATP-dependent hybridization of homologous single-stranded DNAs. It interacts with LexA causing its activation and leading to its autocatalytic cleavage. In Nocardia farcinica (strain IFM 10152), this protein is Protein RecA.